A 92-amino-acid chain; its full sequence is Auxin-responsive protein SAUR28 (92 aa).

It belongs to the ARG7 family. Higher expression in thermo-responsive cultivars (e.g. cv. Alst-1, cv. Ang-0 and cv. Com-0) than in low thermo-responsive cultivars (e.g. cv. Dja-1, cv. El-0 and cv. Kon).

The protein resides in the cell membrane. Functionally, functions as a positive effector of cell expansion through modulation of auxin transport. Involved in thermo-responsiveness of plant architecture. Enhances plasma membrane H(+)-ATPase. The sequence is that of Auxin-responsive protein SAUR28 from Arabidopsis thaliana (Mouse-ear cress).